Reading from the N-terminus, the 162-residue chain is Regulatory protein RecX (162 aa).

This sequence belongs to the RecX family.

The protein resides in the cytoplasm. In terms of biological role, modulates RecA activity. This is Regulatory protein RecX from Xanthomonas oryzae pv. oryzae (strain PXO99A).